We begin with the raw amino-acid sequence, 467 residues long: 5'-nucleotidase domain-containing protein 1 (467 aa).

Residue D16 is the Nucleophile of the active site. D16 and D18 together coordinate Mg(2+). D18 acts as the Proton donor in catalysis. K181 is subject to N6-acetyllysine. D323 is a Mg(2+) binding site.

Belongs to the 5'(3')-deoxyribonucleotidase family.

This is 5'-nucleotidase domain-containing protein 1 (Nt5dc1) from Mus musculus (Mouse).